The sequence spans 317 residues: Cyclin-T1-3 (317 aa).

It belongs to the cyclin family. Cyclin T subfamily. Interacts with CDKC-1 and CDKC-2. Abundantly expressed in flowers. Expressed in roots, seedlings, rosettes and stems.

In Arabidopsis thaliana (Mouse-ear cress), this protein is Cyclin-T1-3 (CYCT1-3).